A 311-amino-acid chain; its full sequence is Very-long-chain 3-oxoacyl-CoA reductase-B (311 aa).

A helical transmembrane segment spans residues 8 to 28 (LFWVGAVTVLWLSVSSLWSLI). Position 48–77 (48–77 (GKWAVVTGATDGIGKAYAEELARRGFAIVL)) interacts with NADP(+). The helical transmembrane segment at 125–145 (IGVLVNNVGVSYSYPEFFLNI) threads the bilayer. Ser187 serves as a coordination point for substrate. The active-site Proton acceptor is Tyr200. The helical transmembrane segment at 269–289 (GYLPHAIMGWVTASLLPAKLL) threads the bilayer.

It belongs to the short-chain dehydrogenases/reductases (SDR) family. 17-beta-HSD 3 subfamily.

The protein resides in the endoplasmic reticulum membrane. The catalysed reaction is a very-long-chain (3R)-3-hydroxyacyl-CoA + NADP(+) = a very-long-chain 3-oxoacyl-CoA + NADPH + H(+). The enzyme catalyses 17beta-estradiol + NAD(+) = estrone + NADH + H(+). It carries out the reaction 17beta-estradiol + NADP(+) = estrone + NADPH + H(+). It functions in the pathway lipid metabolism; fatty acid biosynthesis. Its pathway is steroid biosynthesis; estrogen biosynthesis. Its function is as follows. Catalyzes the second of the four reactions of the long-chain fatty acids elongation cycle. This endoplasmic reticulum-bound enzymatic process, allows the addition of two carbons to the chain of long- and very long-chain fatty acids/VLCFAs per cycle. This enzyme has a 3-ketoacyl-CoA reductase activity, reducing 3-ketoacyl-CoA to 3-hydroxyacyl-CoA, within each cycle of fatty acid elongation. Thereby, it may participate in the production of VLCFAs of different chain lengths that are involved in multiple biological processes as precursors of membrane lipids and lipid mediators. May also catalyze the transformation of estrone (E1) into estradiol (E2) and play a role in estrogen formation. The sequence is that of Very-long-chain 3-oxoacyl-CoA reductase-B (hsd17b12b) from Danio rerio (Zebrafish).